Here is an 885-residue protein sequence, read N- to C-terminus: MFHHRGGCTPRAQTPYAANVPIVAEQQQFQQQIDQTANAMGNFQLNDNAYSFTQPAQQPQQPSSRKVANQLYPVDLFTELPPPIRDLSLPPPPITISQDSIVTPSETSNVPYQYVRSTLNAVPKTSSLLKKTKLPFGIVIRPYLNLQDSSEYVPLNNDGIIVRCRRCRSYLNPFVAFIEQGRRWQCNICRFKNDVPFGFDQNLQGAPINRYERNEIKHSVMEYLAPIEYSVREPPPSTYVFILDVSQNAVRNGLLATSARTILENLESLPNHDGRTSVSIICVDHALHYFYVPLDDDYEESDDDDDEDDDDEEEDNEEEEEEEEDEEDDDDSITEAIQMFDVGDLSEPFLPMPSEELVVPLRYCKKNLEKLLKTIPEVFQDTHISKFALGPALKAASYLISNTGGKIEVISSTLPDTGVGKLKRRAEQGVLNTTKESSQLLSCQDSFYKTFTIECSKMQITVDMFLASEEYMDVATLSHLSRFSGGQTHFYPGFNATSLNDVTKFTRELSKHLSMDISMEAVMRVRGSTGLRATSFFGHFFNRSSDLCAFSTMPRDQSYLFEISIEDSLVAEHCYLQVSTLLTLNTGERRIRVMTLALPTTESGREVYASADQLAITDFITQNAVAKALNSSMDSARDLITKSLQDILSAYKKEISMSNITAVTSLNLCANLRMLPLLMNALGKHIAFRPGMVPSDYRASSLNKLETEPLHYLIKSIYPTVYSLHDIPDEVGLLDSNRETKLPDPINATASLFERYGLYLIDNSTELFLWVGGDAVPELLNDVFNTDNISNVPVGKSELPVLIDSPFNVRLRNIISKIRENNDTITFQSLYTIRGPSINEPANLTAEREMASLRLWVSSTLVEDKILNCASYREYLQSMKTAINR.

Zn(2+) is bound by residues C164, C167, C186, and C189. The tract at residues 164–189 is zinc finger-like; the sequence is CRRCRSYLNPFVAFIEQGRRWQCNIC. Residues 296 to 332 form a disordered region; sequence DDYEESDDDDDEDDDDEEEDNEEEEEEEEDEEDDDDS.

Belongs to the SEC23/SEC24 family. SEC24 subfamily. In terms of assembly, the COPII coat is composed of at least 5 proteins: the SEC23/24 complex, the SEC13/31 complex, and the protein SAR1. Golgi apparatus membrane; Peripheral membrane protein; Cytoplasmic side.

The protein resides in the cytoplasm. Its subcellular location is the cytoplasmic vesicle. It is found in the COPII-coated vesicle membrane. It localises to the endoplasmic reticulum membrane. The protein localises to the golgi apparatus membrane. Its function is as follows. Component of the coat protein complex II (COPII) which promotes the formation of transport vesicles from the endoplasmic reticulum (ER). The coat has two main functions, the physical deformation of the endoplasmic reticulum membrane into vesicles and the selection of cargo molecules. This is Protein transport protein SEC24-1 (SEC241) from Saccharomyces uvarum (strain ATCC 76518 / CBS 7001 / CLIB 283 / NBRC 10550 / MCYC 623 / NCYC 2669 / NRRL Y-11845) (Yeast).